The sequence spans 177 residues: Protein-export protein SecB (177 aa).

Residues 1-22 are disordered; the sequence is MSDENNSGAAAPEAQNPGQNAA. Residues 8 to 22 are compositionally biased toward low complexity; that stretch reads GAAAPEAQNPGQNAA.

The protein belongs to the SecB family. As to quaternary structure, homotetramer, a dimer of dimers. One homotetramer interacts with 1 SecA dimer.

It localises to the cytoplasm. Functionally, one of the proteins required for the normal export of preproteins out of the cell cytoplasm. It is a molecular chaperone that binds to a subset of precursor proteins, maintaining them in a translocation-competent state. It also specifically binds to its receptor SecA. The protein is Protein-export protein SecB of Paracoccus denitrificans (strain Pd 1222).